Reading from the N-terminus, the 234-residue chain is Endonuclease V (234 aa).

2 residues coordinate Mg(2+): Asp-36 and Asp-104.

Belongs to the endonuclease V family. Mg(2+) is required as a cofactor.

Its subcellular location is the cytoplasm. The catalysed reaction is Endonucleolytic cleavage at apurinic or apyrimidinic sites to products with a 5'-phosphate.. Its function is as follows. DNA repair enzyme involved in the repair of deaminated bases. Selectively cleaves double-stranded DNA at the second phosphodiester bond 3' to a deoxyinosine leaving behind the intact lesion on the nicked DNA. This Yersinia pseudotuberculosis serotype O:1b (strain IP 31758) protein is Endonuclease V.